Consider the following 1428-residue polypeptide: DNA-directed RNA polymerase subunit beta' (1428 aa).

Residues Cys66, Cys68, Cys81, and Cys84 each coordinate Zn(2+). Mg(2+)-binding residues include Asp472, Asp474, and Asp476. Zn(2+) is bound by residues Cys816, Cys890, Cys897, and Cys900.

Belongs to the RNA polymerase beta' chain family. As to quaternary structure, the RNAP catalytic core consists of 2 alpha, 1 beta, 1 beta' and 1 omega subunit. When a sigma factor is associated with the core the holoenzyme is formed, which can initiate transcription. Requires Mg(2+) as cofactor. Zn(2+) serves as cofactor.

The enzyme catalyses RNA(n) + a ribonucleoside 5'-triphosphate = RNA(n+1) + diphosphate. In terms of biological role, DNA-dependent RNA polymerase catalyzes the transcription of DNA into RNA using the four ribonucleoside triphosphates as substrates. This is DNA-directed RNA polymerase subunit beta' from Phocaeicola vulgatus (strain ATCC 8482 / DSM 1447 / JCM 5826 / CCUG 4940 / NBRC 14291 / NCTC 11154) (Bacteroides vulgatus).